The chain runs to 158 residues: MTSLVYFSSASENTHRFVQRLGLPATRIPIHDREGTFEVREPYVLIVPTYGGGTTAMGRDTSYVPKPVIRFLNNTHNRSLIRAVIAAGNTNFGESYCFAGNIISQKCHVPYLYRFELMGTAEDVERVRAGLGEFWDHLDDEEHEKWRRPSQTPSTRGA.

Belongs to the NrdI family.

Functionally, probably involved in ribonucleotide reductase function. This is Protein NrdI from Rhodococcus jostii (strain RHA1).